The sequence spans 271 residues: Hydroxyethylthiazole kinase (271 aa).

Met46 lines the substrate pocket. ATP is bound by residues Arg122 and Thr169. Residue Gly196 participates in substrate binding.

This sequence belongs to the Thz kinase family. Requires Mg(2+) as cofactor.

It catalyses the reaction 5-(2-hydroxyethyl)-4-methylthiazole + ATP = 4-methyl-5-(2-phosphooxyethyl)-thiazole + ADP + H(+). It functions in the pathway cofactor biosynthesis; thiamine diphosphate biosynthesis; 4-methyl-5-(2-phosphoethyl)-thiazole from 5-(2-hydroxyethyl)-4-methylthiazole: step 1/1. In terms of biological role, catalyzes the phosphorylation of the hydroxyl group of 4-methyl-5-beta-hydroxyethylthiazole (THZ). The polypeptide is Hydroxyethylthiazole kinase (Alkaliphilus oremlandii (strain OhILAs) (Clostridium oremlandii (strain OhILAs))).